The primary structure comprises 172 residues: Adenine phosphoribosyltransferase (172 aa).

It belongs to the purine/pyrimidine phosphoribosyltransferase family. As to quaternary structure, homodimer.

Its subcellular location is the cytoplasm. It catalyses the reaction AMP + diphosphate = 5-phospho-alpha-D-ribose 1-diphosphate + adenine. Its pathway is purine metabolism; AMP biosynthesis via salvage pathway; AMP from adenine: step 1/1. Functionally, catalyzes a salvage reaction resulting in the formation of AMP, that is energically less costly than de novo synthesis. The protein is Adenine phosphoribosyltransferase of Roseiflexus castenholzii (strain DSM 13941 / HLO8).